A 220-amino-acid chain; its full sequence is Large ribosomal subunit protein uL3 (220 aa).

A disordered region spans residues 137-159 (GASHGAHKNHRKPGSIGGASTPS).

It belongs to the universal ribosomal protein uL3 family. Part of the 50S ribosomal subunit. Forms a cluster with proteins L14 and L19.

In terms of biological role, one of the primary rRNA binding proteins, it binds directly near the 3'-end of the 23S rRNA, where it nucleates assembly of the 50S subunit. The polypeptide is Large ribosomal subunit protein uL3 (Renibacterium salmoninarum (strain ATCC 33209 / DSM 20767 / JCM 11484 / NBRC 15589 / NCIMB 2235)).